A 488-amino-acid chain; its full sequence is Glutamyl-tRNA(Gln) amidotransferase subunit A (488 aa).

Catalysis depends on charge relay system residues Lys-77 and Ser-152. The Acyl-ester intermediate role is filled by Ser-176.

This sequence belongs to the amidase family. GatA subfamily. As to quaternary structure, heterotrimer of A, B and C subunits.

The enzyme catalyses L-glutamyl-tRNA(Gln) + L-glutamine + ATP + H2O = L-glutaminyl-tRNA(Gln) + L-glutamate + ADP + phosphate + H(+). Functionally, allows the formation of correctly charged Gln-tRNA(Gln) through the transamidation of misacylated Glu-tRNA(Gln) in organisms which lack glutaminyl-tRNA synthetase. The reaction takes place in the presence of glutamine and ATP through an activated gamma-phospho-Glu-tRNA(Gln). In Streptococcus sanguinis (strain SK36), this protein is Glutamyl-tRNA(Gln) amidotransferase subunit A.